A 348-amino-acid polypeptide reads, in one-letter code: UDP-3-O-acylglucosamine N-acyltransferase (348 aa).

His243 serves as the catalytic Proton acceptor.

It belongs to the transferase hexapeptide repeat family. LpxD subfamily. Homotrimer.

The catalysed reaction is a UDP-3-O-[(3R)-3-hydroxyacyl]-alpha-D-glucosamine + a (3R)-hydroxyacyl-[ACP] = a UDP-2-N,3-O-bis[(3R)-3-hydroxyacyl]-alpha-D-glucosamine + holo-[ACP] + H(+). It functions in the pathway bacterial outer membrane biogenesis; LPS lipid A biosynthesis. Its function is as follows. Catalyzes the N-acylation of UDP-3-O-acylglucosamine using 3-hydroxyacyl-ACP as the acyl donor. Is involved in the biosynthesis of lipid A, a phosphorylated glycolipid that anchors the lipopolysaccharide to the outer membrane of the cell. This Hahella chejuensis (strain KCTC 2396) protein is UDP-3-O-acylglucosamine N-acyltransferase.